Here is a 116-residue protein sequence, read N- to C-terminus: MKHMSNVKIERYESIIKDLISHAITTLVYDDLIKQATVHYVTLSKDKSIAKVYISCYDKTIIDKILKKINGASGFFRTILAKNLNLRKAPAIVFLNDESIDKIDEINSLLEQIKGK.

Belongs to the RbfA family. In terms of assembly, monomer. Binds 30S ribosomal subunits, but not 50S ribosomal subunits or 70S ribosomes.

Its subcellular location is the cytoplasm. Its function is as follows. One of several proteins that assist in the late maturation steps of the functional core of the 30S ribosomal subunit. Associates with free 30S ribosomal subunits (but not with 30S subunits that are part of 70S ribosomes or polysomes). Required for efficient processing of 16S rRNA. May interact with the 5'-terminal helix region of 16S rRNA. The polypeptide is Ribosome-binding factor A (Malacoplasma penetrans (strain HF-2) (Mycoplasma penetrans)).